Here is a 383-residue protein sequence, read N- to C-terminus: tRNA(Met) cytidine acetate ligase (383 aa).

ATP-binding positions include 7–20 (IAEFNPFHSGHEFL), G101, N153, and 178–179 (RI).

It belongs to the TmcAL family.

The protein localises to the cytoplasm. It catalyses the reaction cytidine(34) in elongator tRNA(Met) + acetate + ATP = N(4)-acetylcytidine(34) in elongator tRNA(Met) + AMP + diphosphate. Functionally, catalyzes the formation of N(4)-acetylcytidine (ac(4)C) at the wobble position of elongator tRNA(Met), using acetate and ATP as substrates. First activates an acetate ion to form acetyladenylate (Ac-AMP) and then transfers the acetyl group to tRNA to form ac(4)C34. The chain is tRNA(Met) cytidine acetate ligase from Lactobacillus helveticus (strain DPC 4571).